A 160-amino-acid polypeptide reads, in one-letter code: 6,7-dimethyl-8-ribityllumazine synthase (160 aa).

5-amino-6-(D-ribitylamino)uracil is bound by residues W27, 59-61 (AIE), and 81-83 (VVI). 86–87 (QT) is a binding site for (2S)-2-hydroxy-3-oxobutyl phosphate. Catalysis depends on H89, which acts as the Proton donor. N114 is a binding site for 5-amino-6-(D-ribitylamino)uracil. A (2S)-2-hydroxy-3-oxobutyl phosphate-binding site is contributed by R128.

It belongs to the DMRL synthase family. As to quaternary structure, homopentamer.

The enzyme catalyses (2S)-2-hydroxy-3-oxobutyl phosphate + 5-amino-6-(D-ribitylamino)uracil = 6,7-dimethyl-8-(1-D-ribityl)lumazine + phosphate + 2 H2O + H(+). Its pathway is cofactor biosynthesis; riboflavin biosynthesis; riboflavin from 2-hydroxy-3-oxobutyl phosphate and 5-amino-6-(D-ribitylamino)uracil: step 1/2. Functionally, catalyzes the formation of 6,7-dimethyl-8-ribityllumazine by condensation of 5-amino-6-(D-ribitylamino)uracil with 3,4-dihydroxy-2-butanone 4-phosphate. This is the penultimate step in the biosynthesis of riboflavin. The protein is 6,7-dimethyl-8-ribityllumazine synthase of Mycobacterium sp. (strain JLS).